A 236-amino-acid chain; its full sequence is Adenosine 5'-phosphosulfate reductase (236 aa).

The [4Fe-4S] cluster site is built by C122, C123, C205, and C208. The active-site Nucleophile; cysteine thiosulfonate intermediate is the C231.

This sequence belongs to the PAPS reductase family. CysH subfamily. [4Fe-4S] cluster serves as cofactor.

The protein localises to the cytoplasm. It carries out the reaction [thioredoxin]-disulfide + sulfite + AMP + 2 H(+) = adenosine 5'-phosphosulfate + [thioredoxin]-dithiol. The protein operates within sulfur metabolism; hydrogen sulfide biosynthesis; sulfite from sulfate. Functionally, catalyzes the formation of sulfite from adenosine 5'-phosphosulfate (APS) using thioredoxin as an electron donor. The sequence is that of Adenosine 5'-phosphosulfate reductase from Mycolicibacterium smegmatis (strain ATCC 700084 / mc(2)155) (Mycobacterium smegmatis).